Reading from the N-terminus, the 468-residue chain is Monocarboxylate transporter 6 (468 aa).

At Met1–Ala13 the chain is on the cytoplasmic side. The chain crosses the membrane as a helical span at residues Trp14 to Ile34. Over Gly35–Ser53 the chain is Extracellular. A helical transmembrane segment spans residues Trp54 to Val74. The Cytoplasmic segment spans residues Lys75 to Arg80. Residues Val81–Gly101 form a helical membrane-spanning segment. A topological domain (extracellular) is located at residue Ser102. The chain crosses the membrane as a helical span at residues Leu103–Phe122. The Cytoplasmic portion of the chain corresponds to Gln123–Pro138. A helical transmembrane segment spans residues Leu139–Ala159. Topologically, residues Arg160–Ala171 are extracellular. Residues Phe172–Val192 form a helical membrane-spanning segment. The Cytoplasmic segment spans residues Ala193 to Cys239. Residues Ile240–Val260 form a helical membrane-spanning segment. At Pro261 to Ala274 the chain is on the extracellular side. A helical transmembrane segment spans residues Met275–Leu295. The Cytoplasmic segment spans residues Ala296–Lys306. The helical transmembrane segment at Tyr307–Ala327 threads the bilayer. The Extracellular segment spans residues Asp328–Arg330. Residues Val331–Phe351 form a helical membrane-spanning segment. The Cytoplasmic portion of the chain corresponds to Gln352 to Gly368. A helical transmembrane segment spans residues Leu369–Leu389. Residues Asp390–Ser396 are Extracellular-facing. The chain crosses the membrane as a helical span at residues Tyr397–Phe417. The Cytoplasmic portion of the chain corresponds to Tyr418–Val468. A disordered region spans residues Gly429 to Val468. Over residues Leu446–Lys455 the composition is skewed to basic and acidic residues.

This sequence belongs to the major facilitator superfamily. Monocarboxylate porter (TC 2.A.1.13) family.

Its subcellular location is the cell membrane. Proton-linked monocarboxylate transporter. Catalyzes the rapid transport across the plasma membrane of many monocarboxylates such as lactate, pyruvate, branched-chain oxo acids derived from leucine, valine and isoleucine, and the ketone bodies acetoacetate, beta-hydroxybutyrate and acetate. The chain is Monocarboxylate transporter 6 (Slc16a5) from Mus musculus (Mouse).